A 236-amino-acid chain; its full sequence is Urease accessory protein UreG (236 aa).

Residues 1–26 (MHDHSLHSGHDHGLGPGSFHDRGAPH) form a disordered region. 42–49 (GPVGSGKT) contributes to the GTP binding site.

Belongs to the SIMIBI class G3E GTPase family. UreG subfamily. As to quaternary structure, homodimer. UreD, UreF and UreG form a complex that acts as a GTP-hydrolysis-dependent molecular chaperone, activating the urease apoprotein by helping to assemble the nickel containing metallocenter of UreC. The UreE protein probably delivers the nickel.

Its subcellular location is the cytoplasm. Functionally, facilitates the functional incorporation of the urease nickel metallocenter. This process requires GTP hydrolysis, probably effectuated by UreG. The protein is Urease accessory protein UreG of Anaeromyxobacter sp. (strain Fw109-5).